Here is a 240-residue protein sequence, read N- to C-terminus: uncharacterized protein (240 aa).

The interval 93–160 is disordered; it reads QEASGCTVGE…AGGGAAASGQ (68 aa). 2 stretches are compositionally biased toward low complexity: residues 110–119 and 129–150; these read AQPSQPAQGG and GGAE…PAEN.

This is an uncharacterized protein from Streptomyces viridochromogenes.